We begin with the raw amino-acid sequence, 464 residues long: DNA repair protein KRE29 (464 aa).

The disordered stretch occupies residues 1 to 69; that stretch reads MGSVNSSPNE…SDEEFSSLEN (69 aa). The segment covering 53 to 65 has biased composition (acidic residues); sequence PENDSLNSDEEFS. Phosphoserine occurs at positions 81 and 101.

As to quaternary structure, component of the Smc5-Smc6 complex which consists of KRE29, MMS21, NSE1, NSE3, NSE4, NSE5, SMC5 and SMC6. Interacts with NSE5.

The protein resides in the nucleus. The protein localises to the cytoplasm. Functionally, acts in a DNA repair pathway for removal of UV-induced DNA damage that is distinct from classical nucleotide excision repair and in repair of ionizing radiation damage. Functions in homologous recombination repair of DNA double strand breaks and in recovery of stalled replication forks. The sequence is that of DNA repair protein KRE29 (KRE29) from Saccharomyces cerevisiae (strain ATCC 204508 / S288c) (Baker's yeast).